A 138-amino-acid chain; its full sequence is Large ribosomal subunit protein uL16 (138 aa).

It belongs to the universal ribosomal protein uL16 family. In terms of assembly, part of the 50S ribosomal subunit.

Its function is as follows. Binds 23S rRNA and is also seen to make contacts with the A and possibly P site tRNAs. The sequence is that of Large ribosomal subunit protein uL16 from Ureaplasma urealyticum serovar 10 (strain ATCC 33699 / Western).